The sequence spans 332 residues: Biotin synthase (332 aa).

The Radical SAM core domain maps to 53 to 282; sequence YFGKKVKLNM…TKEIRISGGR (230 aa). Residues C71, C75, and C78 each coordinate [4Fe-4S] cluster. 4 residues coordinate [2Fe-2S] cluster: C115, C147, C207, and R277.

Belongs to the radical SAM superfamily. Biotin synthase family. Homodimer. [4Fe-4S] cluster serves as cofactor. [2Fe-2S] cluster is required as a cofactor.

It carries out the reaction (4R,5S)-dethiobiotin + (sulfur carrier)-SH + 2 reduced [2Fe-2S]-[ferredoxin] + 2 S-adenosyl-L-methionine = (sulfur carrier)-H + biotin + 2 5'-deoxyadenosine + 2 L-methionine + 2 oxidized [2Fe-2S]-[ferredoxin]. Its pathway is cofactor biosynthesis; biotin biosynthesis; biotin from 7,8-diaminononanoate: step 2/2. Functionally, catalyzes the conversion of dethiobiotin (DTB) to biotin by the insertion of a sulfur atom into dethiobiotin via a radical-based mechanism. The polypeptide is Biotin synthase (Bacillus thuringiensis (strain Al Hakam)).